Here is a 357-residue protein sequence, read N- to C-terminus: MIEQQKRKGPELPLVPVKRQRHELLLGAGSGPGAGQQQATPGALLQAGPPRCSSLQAPIMLLSGHEGEVYCCKFHPNGSTLASAGFDRLILLWNVYGDCGNYATLKGYSGAVMELHYNTDGSMLFSASTDKTVAVWDSETGERVKRLKGHTSFVNSCYPARRGPQLVCTGSDDGTVKLWDIRKKAAIQTFQNTYQVLAVTFNDTSDQIISGGIDNDIKVWDLRQNKLTYTMRGHADSVTGLSLSSEGSYLLSNAMDNTVRVWDVRPFAPKERCVKIFQGNVHNFEKNLLRCSWSPDGSKIAAGSADRSVCVWDTTSRRILYKLPGHAGSINEVAFHPDEPIIISASSDKRLYMGEIQ.

Lys18 is covalently cross-linked (Glycyl lysine isopeptide (Lys-Gly) (interchain with G-Cter in SUMO2)). Arg21 is subject to Asymmetric dimethylarginine. WD repeat units lie at residues 64-103, 107-146, 149-189, 191-230, 233-272, 283-322, and 325-357; these read GHEG…GNYA, GYSG…RVKR, GHTS…AIQT, QNTY…LTYT, GHAD…PKER, NFEK…ILYK, and GHAG…GEIQ. Lys270 is covalently cross-linked (Glycyl lysine isopeptide (Lys-Gly) (interchain with G-Cter in SUMO2)).

As to quaternary structure, component of the pre-catalytic and catalytic spliceosome complexes. Component of the postcatalytic spliceosome P complex. Part of the U5 snRNP complex. Interacts with PRPF8. Component of the U4/U6-U5 tri-snRNP complex composed of the U4, U6 and U5 snRNAs and at least PRPF3, PRPF4, PRPF6, PRPF8, PRPF31, SNRNP200, TXNL4A, WDR57, SNRNP40, DDX23, CD2BP2, PPIH, SNU13, EFTUD2, SART1 and USP39. Component of the minor spliceosome, which splices U12-type introns.

It is found in the nucleus. In terms of biological role, required for pre-mRNA splicing as component of the activated spliceosome. Component of the U5 small nuclear ribonucleoprotein (snRNP) complex and the U4/U6-U5 tri-snRNP complex, building blocks of the spliceosome. As a component of the minor spliceosome, involved in the splicing of U12-type introns in pre-mRNAs. The polypeptide is U5 small nuclear ribonucleoprotein 40 kDa protein (SNRNP40) (Pongo abelii (Sumatran orangutan)).